A 654-amino-acid polypeptide reads, in one-letter code: RING finger protein 112 (654 aa).

Residues 80-121 form an RING-type zinc finger; the sequence is CSICLERLREPISLDCGHDFCIRCFSTHRIPGCELPCCPECR. Residues 154–654 form an interaction with ZBTB16 region; sequence AVRAERLLLV…GDREPLLQEE (501 aa). The GB1/RHD3-type G domain maps to 189-420; it reads DTPVCLLAVL…YILDVLSTAP (232 aa). 340-341 is a GTP binding site; the sequence is RD. 2 helical membrane passes run 570 to 590 and 603 to 623; these read LAAVGGAVGAGLMGLAGGVVG and GMVAAGAAVGATGAAVVGGGV.

This sequence belongs to the TRAFAC class dynamin-like GTPase superfamily. GB1/RHD3 GTPase family. GB1 subfamily. As to quaternary structure, self-associates. Interacts with SP1 in an oxidative stress-regulated manner. Interacts with SIGMAR1 in an oxidative stress-regulated manner. Interacts with ZBTB16 (via C2H2-type zinc finger domains 1 and 2). In terms of processing, auto-ubiquitinated. As to expression, expressed in most of the brain areas, including cortex, striatum, hippocampus, thalamus, and cerebellum (at protein level). Expressed in lateral amygdaloid nucleus, and ventromedial hypothalamus. Also expressed strongly in the marginal zone of brain vesicles, optic stalk, and cartilage primordium.

It localises to the membrane. The protein localises to the cytoplasm. Its subcellular location is the nucleus. The protein resides in the nuclear body. It is found in the nucleoplasm. It localises to the endosome. The protein localises to the cytoplasmic vesicle. Its subcellular location is the secretory vesicle. The protein resides in the synaptic vesicle. It is found in the postsynaptic density. It localises to the perikaryon. The protein localises to the cell projection. Its subcellular location is the neuron projection. The enzyme catalyses S-ubiquitinyl-[E2 ubiquitin-conjugating enzyme]-L-cysteine + [acceptor protein]-L-lysine = [E2 ubiquitin-conjugating enzyme]-L-cysteine + N(6)-ubiquitinyl-[acceptor protein]-L-lysine.. It functions in the pathway protein modification; protein ubiquitination. In terms of biological role, E3 ubiquitin-protein ligase that plays an important role in neuronal differentiation, including neurogenesis and gliogenesis, during brain development. During embryonic development initiates neuronal differentiation by inducing cell cycle arrest at the G0/G1 phase through up-regulation of cell-cycle regulatory proteins. Plays a role not only in the fetal period during the development of the nervous system, but also in the adult brain, where it is involved in the maintenance of neural functions and protection of the nervous tissue cells from oxidative stress-induced damage. Exhibits GTPase and E3 ubiquitin-protein ligase activities. Regulates dendritic spine density and synaptic neurotransmission; its ability to hydrolyze GTP is involved in the maintenance of dendritic spine density. This Mus musculus (Mouse) protein is RING finger protein 112 (Rnf112).